The following is a 253-amino-acid chain: Coenzyme F420:L-glutamate ligase (253 aa).

GTP contacts are provided by residues Leu9–Ile12, Ser38–Thr39, and Lys43. Residue Asp113 participates in a divalent metal cation binding. Asn116 serves as a coordination point for GTP. 3 residues coordinate a divalent metal cation: Asp150, Thr151, and Glu208. Ser206–Thr213 is a GTP binding site.

Belongs to the CofE family. Homodimer. Mg(2+) is required as a cofactor. The cofactor is Mn(2+). K(+) serves as cofactor.

It catalyses the reaction oxidized coenzyme F420-0 + GTP + L-glutamate = oxidized coenzyme F420-1 + GDP + phosphate + H(+). The catalysed reaction is oxidized coenzyme F420-1 + GTP + L-glutamate = oxidized coenzyme F420-2 + GDP + phosphate + H(+). Its pathway is cofactor biosynthesis; coenzyme F420 biosynthesis. In terms of biological role, catalyzes the GTP-dependent successive addition of two or more gamma-linked L-glutamates to the L-lactyl phosphodiester of 7,8-didemethyl-8-hydroxy-5-deazariboflavin (F420-0) to form coenzyme F420-0-glutamyl-glutamate (F420-2) or polyglutamated F420 derivatives. This is Coenzyme F420:L-glutamate ligase from Halobacterium salinarum (strain ATCC 29341 / DSM 671 / R1).